The following is a 287-amino-acid chain: Ribosomal RNA small subunit methyltransferase I (287 aa).

This sequence belongs to the methyltransferase superfamily. RsmI family.

It is found in the cytoplasm. It catalyses the reaction cytidine(1402) in 16S rRNA + S-adenosyl-L-methionine = 2'-O-methylcytidine(1402) in 16S rRNA + S-adenosyl-L-homocysteine + H(+). Functionally, catalyzes the 2'-O-methylation of the ribose of cytidine 1402 (C1402) in 16S rRNA. The polypeptide is Ribosomal RNA small subunit methyltransferase I (Streptococcus pyogenes serotype M6 (strain ATCC BAA-946 / MGAS10394)).